We begin with the raw amino-acid sequence, 92 residues long: Small ribosomal subunit protein uS19 (92 aa).

The protein belongs to the universal ribosomal protein uS19 family.

Its function is as follows. Protein S19 forms a complex with S13 that binds strongly to the 16S ribosomal RNA. The chain is Small ribosomal subunit protein uS19 from Streptococcus pyogenes serotype M49 (strain NZ131).